The chain runs to 317 residues: L-lactate dehydrogenase (317 aa).

NAD(+)-binding positions include Val-18, Asp-39, Lys-44, Tyr-69, and Gly-83 to Ala-84. Residues Gln-86, Arg-92, and Asn-124–Asp-127 each bind substrate. NAD(+) contacts are provided by residues Val-122–Asn-124 and Ser-147. Residue Asp-152–Arg-155 participates in substrate binding. Arg-157 and His-172 together coordinate beta-D-fructose 1,6-bisphosphate. Catalysis depends on His-179, which acts as the Proton acceptor. Tyr-225 is subject to Phosphotyrosine. Thr-234 is a substrate binding site.

It belongs to the LDH/MDH superfamily. LDH family. In terms of assembly, homotetramer.

It localises to the cytoplasm. The enzyme catalyses (S)-lactate + NAD(+) = pyruvate + NADH + H(+). It functions in the pathway fermentation; pyruvate fermentation to lactate; (S)-lactate from pyruvate: step 1/1. Allosterically activated by fructose 1,6-bisphosphate (FBP). In terms of biological role, catalyzes the conversion of lactate to pyruvate. The protein is L-lactate dehydrogenase of Acetivibrio thermocellus (strain ATCC 27405 / DSM 1237 / JCM 9322 / NBRC 103400 / NCIMB 10682 / NRRL B-4536 / VPI 7372) (Clostridium thermocellum).